Consider the following 856-residue polypeptide: PR domain zinc finger protein 1 (856 aa).

The region spanning 115–233 is the SET domain; it reads PRNLLFKYAA…ANQELLVWYC (119 aa). Disordered stretches follow at residues 357-399 and 532-571; these read THSP…APGL and GAAA…VMAA. 2 stretches are compositionally biased toward low complexity: residues 373–393 and 542–556; these read SSPE…NTVS and SPPS…AATS. The segment at 558-605 is interaction with PIAS1; it reads HVVQPKATSSVMAAPSTDGAMNLIKNKRNMTGYKTLPYPLKKQNGKIK. C2H2-type zinc fingers lie at residues 606–628, 634–656, 662–684, and 690–712; these read YECN…LRVH, FKCQ…YLVH, HECQ…LRLH, and YQCK…KRLH. A Glycyl lysine isopeptide (Lys-Gly) (interchain with G-Cter in SUMO1); alternate cross-link involves residue Lys847. Lys847 is covalently cross-linked (Glycyl lysine isopeptide (Lys-Gly) (interchain with G-Cter in SUMO2); alternate).

This sequence belongs to the class V-like SAM-binding methyltransferase superfamily. In terms of assembly, interacts with PRMT5. Interacts with FBXO10. Interacts with FBXO11. Interacts with multiple nuclear sumoylation E3 ligases, including CBX4, PIAS1, PIAS2, PIAS3, PIAS4, PML and RNF4, but not RANBP2. Interacts with LDB1, SMARCD3 and SMARCC1. Interacts with EEIG1; following TNFSF11/RANKL stimulation in bone marrow-derived macrophages, the interaction promotes the binding of PRDM1/BLIMP1 to the gene promoter of IRF8. Sumoylation at Lys-847 by PIAS1 increases transcriptional repressor activity, and is critical for plasma cell differentiation. Can be sumoylated with SUMO1 and SUMO2 by PML. Degradation of the wild-type protein mostly depends upon sumoylation, rather than ubiquitination. Desumoylated by SENP1 and SENP6. In terms of processing, ubiquitinated by SCF(FBXO11), leading to its degradation by the proteasome. As to expression, expressed in bone marrow macrophages (at protein level). Expressed in innate lymphocytes, including tissue-resident conventional natural killer (cNK) cells in liver. Expressed also weakly in tissue-resident natural killer (trNK) and natural killer T (NKT) cells in liver. Expressed in bone marrow, spleen and lymph node but not in brain, heart, kidney, liver, ovary or muscle. Weak expression detected in the lung. In terms of tissue distribution, expressed only in the yolk sac. As to expression, expressed in embryo, yolk sac, placenta, splenocytes, and activated T-cells.

Its subcellular location is the nucleus. It is found in the cytoplasm. Functionally, transcription factor that mediates a transcriptional program in various innate and adaptive immune tissue-resident lymphocyte T cell types such as tissue-resident memory T (Trm), natural killer (trNK) and natural killer T (NKT) cells and negatively regulates gene expression of proteins that promote the egress of tissue-resident T-cell populations from non-lymphoid organs. Plays a role in the development, retention and long-term establishment of adaptive and innate tissue-resident lymphocyte T cell types in non-lymphoid organs, such as the skin and gut, but also in other nonbarrier tissues like liver and kidney, and therefore may provide immediate immunological protection against reactivating infections or viral reinfection. Binds specifically to the PRDI element in the promoter of the beta-interferon gene. Drives the maturation of B-lymphocytes into Ig secreting cells. Associates with the transcriptional repressor ZNF683 to chromatin at gene promoter regions. Binds to the promoter and acts as a transcriptional repressor of IRF8, thereby promotes transcription of osteoclast differentiation factors such as NFATC1 and EEIG1. The sequence is that of PR domain zinc finger protein 1 (Prdm1) from Mus musculus (Mouse).